The chain runs to 685 residues: Protein OCTOPUS (685 aa).

Disordered stretches follow at residues 1–34 (MNPA…CNRH), 152–202 (RNLP…DYVE), and 280–314 (KWRQ…RQLR). Over residues 179–202 (VNDEGEAESDDEELEEEEEEDYVE) the composition is skewed to acidic residues. Basic residues predominate over residues 280 to 291 (KWRQNQKMKKRR). The span at 292–314 (NGGDHRPGSARLPVEKPIGRQLR) shows a compositional bias: basic and acidic residues. The residue at position 318 (serine 318) is a Phosphoserine. A disordered region spans residues 419–471 (VEEPAPPPPVVNQTNGVSDPVIIPGGSIQTRDYYTDSSSRRRKSLDRSSSSMR). A coiled-coil region spans residues 549–578 (LIYRKSVNKYEEEEEEEEDRYRRLNGGMVE). The tract at residues 584 to 640 (SWPELRNGGGGGGGPRMVRSNSNVSWRSSGGGSARKVNGLDRRNKSSRYSPKNGENG) is disordered. Over residues 601-611 (VRSNSNVSWRS) the composition is skewed to low complexity.

This sequence belongs to the OCTOPUS family. Interacts with VCC. In terms of processing, phosphorylation at Ser-318 amplifies the promotion of protophloem differentiation. In terms of tissue distribution, expressed in provascular cells and phloem initials (e.g. protophloem, metaphloem, sieve element precursor cells and sieve element procambium precursor cells).

The protein localises to the cell membrane. It localises to the cytoplasm. Its function is as follows. Potentiates primary root protophloem differentiation. Required, together with VCC, for embryo provasculature development and cotyledon vascular complexity and connectivity. Regulates roots architecture. Mediates the recruitment of ASK7/BIN2 to the plasma membrane. The sequence is that of Protein OCTOPUS from Arabidopsis thaliana (Mouse-ear cress).